The chain runs to 321 residues: Peroxidase 4 (321 aa).

Positions M1–A25 are cleaved as a signal peptide. Q26 is subject to Pyrrolidone carboxylic acid. Cystine bridges form between C36–C116, C69–C74, C122–C317, and C201–C226. The Proton acceptor role is filled by H67. The Ca(2+) site is built by D68, V71, G73, D75, and S77. Residue P164 coordinates substrate. Position 194 (H194) interacts with heme b. T195 serves as a coordination point for Ca(2+). A glycan (N-linked (GlcNAc...) asparagine) is linked at N210. The Ca(2+) site is built by D241, T244, and D249.

This sequence belongs to the peroxidase family. Classical plant (class III) peroxidase subfamily. Heme b is required as a cofactor. Requires Ca(2+) as cofactor.

It is found in the secreted. The catalysed reaction is 2 a phenolic donor + H2O2 = 2 a phenolic radical donor + 2 H2O. Functionally, removal of H(2)O(2), oxidation of toxic reductants, biosynthesis and degradation of lignin, suberization, auxin catabolism, response to environmental stresses such as wounding, pathogen attack and oxidative stress. These functions might be dependent on each isozyme/isoform in each plant tissue. This Vitis vinifera (Grape) protein is Peroxidase 4.